A 160-amino-acid polypeptide reads, in one-letter code: MAISTPMLVTFIVYIFGMVLIGFIAWRSTKNFDDYILGGRSLGPFVTALSAGASDMSGWLLMGLPGAIFISGISESWIAIGLTLGAWINWKLVAGRLRVHTEVNNNALTXPDYFTGRFEDHHNFHGFRTRVVKHIACILYRHDGALCGIGSRHAQRHFLH.

2 helical membrane-spanning segments follow: residues 6–26 (PMLVTFIVYIFGMVLIGFIAW) and 68–88 (IFISGISESWIAIGLTLGAWI).

The protein belongs to the sodium:solute symporter (SSF) (TC 2.A.21) family.

It localises to the cell inner membrane. The enzyme catalyses L-proline(in) + Na(+)(in) = L-proline(out) + Na(+)(out). In terms of biological role, catalyzes the sodium-dependent uptake of extracellular L-proline. In Klebsiella oxytoca, this protein is Sodium/proline symporter.